Here is a 1070-residue protein sequence, read N- to C-terminus: Ubiquitin-protein ligase E3B (1070 aa).

Residue methionine 1 is modified to N-acetylmethionine. The region spanning 29–58 (RERSAVTIQALVRSFLCRRRLHRDIRKEID) is the IQ domain. Serine 421 carries the phosphoserine modification. Residues 704-1070 (SQHAMKGVIR…ISMNTGFELS (367 aa)) form the HECT domain. Cysteine 1038 acts as the Glycyl thioester intermediate in catalysis.

As to expression, widely expressed. High expression is observed in developing central nervous system.

It is found in the postsynaptic density. The enzyme catalyses S-ubiquitinyl-[E2 ubiquitin-conjugating enzyme]-L-cysteine + [acceptor protein]-L-lysine = [E2 ubiquitin-conjugating enzyme]-L-cysteine + N(6)-ubiquitinyl-[acceptor protein]-L-lysine.. It participates in protein modification; protein ubiquitination. E3 ubiquitin-protein ligase which accepts ubiquitin from an E2 ubiquitin-conjugating enzyme in the form of a thioester and then directly transfers the ubiquitin to targeted substrates. Ubiquitinates BCKDK and targets it for degradation, thereby regulating various metabolic processes. Involved in the positive regulation of neurite branching in hippocampal neurons and the control of neuronal spine number and morphology, through the ubiquitination of PPP3CC. The polypeptide is Ubiquitin-protein ligase E3B (Ube3b) (Mus musculus (Mouse)).